A 301-amino-acid polypeptide reads, in one-letter code: Polynucleotide kinase (301 aa).

As to quaternary structure, homotetramer. Mg(2+) is required as a cofactor.

The catalysed reaction is a 5'-end dephospho-2'-deoxyribonucleoside-DNA + ATP = a 5'-end 5'-phospho-2'-deoxyribonucleoside-DNA + ADP + H(+). It carries out the reaction a 2'-deoxyribonucleoside 3'-phosphate + H2O = a 2'-deoxyribonucleoside + phosphate. Functionally, acts as a 5'-hydroxyl kinase, a 3'-phosphatase and a 2',3'-cyclic phosphodiesterase. Catalyzes the transfer of the terminal phosphate of ATP to the 5'-hydroxyl termini of ribo- and deoxyribonucleotides. In the presence of ADP the enzyme also catalyzes an exchange reaction. In the exchange reaction, an excess ADP causes the enzyme to transfer the 5' terminal phosphate from phosphorylated DNA to ADP. Involved in countering a host defense mechanism which activates T4-induced anticodon nuclease and shuts off viral translation. The polynucleotide kinase modifies the ends of nicked tRNA generated by the antiviral response of the host bacteria and facilitates repair by T4 RNA ligase. The polypeptide is Polynucleotide kinase (pseT) (Escherichia coli (Bacteriophage T4)).